We begin with the raw amino-acid sequence, 313 residues long: uncharacterized protein (313 aa).

The next 2 membrane-spanning stretches (helical) occupy residues 42 to 64 and 74 to 96; these read LVVLFNGALLLLCMGTGYVLFLT and VRAYGIFFLIFLLLFLLINTLYV.

It is found in the cell membrane. This is an uncharacterized protein from Treponema pallidum (strain Nichols).